The chain runs to 121 residues: Estrogen receptor (121 aa).

Positions 1–121 (LFAPNLLLDR…IRHMSNKGME (121 aa)) constitute an NR LBD domain. Residue Cys45 is the site of S-palmitoyl cysteine attachment.

This sequence belongs to the nuclear hormone receptor family. NR3 subfamily. Binds DNA as a homodimer. Can form a heterodimer with ESR2. Interacts with coactivator NCOA5. Interacts with NCOA7; the interaction is ligand-inducible. Interacts with AKAP13, CUEDC2, HEXIM1, KDM5A, MAP1S, PELP1, SMARD1, and UBE1C. Interacts with MUC1; the interaction is stimulated by 7 beta-estradiol (E2) and enhances ERS1-mediated transcription. Interacts with DNTTIP2, and UIMC1. Interacts with KMT2D/MLL2. Interacts with ATAD2; the interaction is enhanced by estradiol. Interacts with KIF18A and LDB1. Interacts with RLIM (via its C-terminus). Interacts with MACROD1. Interacts with SH2D4A and PLCG. Interacts with SH2D4A; the interaction blocks binding to PLCG and inhibits estrogen-induced cell proliferation. Interacts with DYNLL1. Interacts with CCDC62; the interaction requires estradiol and appears to enhance the transcription of target genes. Interacts with NR2C1; the interaction prevents homodimerization of ESR1 and suppresses its transcriptional activity and cell growth. Interacts with DNAAF4. Interacts with PRMT2. Interacts with PI3KR1 or PIK3R2, SRC and PTK2/FAK1. Interacts with RBFOX2. Interacts with EP300; the interaction is estrogen-dependent and enhanced by CITED1. Interacts with CITED1; the interaction is estrogen-dependent. Interacts with FAM120B, FOXL2, PHB2 and SLC30A9. Interacts with coactivators NCOA3 and NCOA6. Interacts with STK3/MST2 only in the presence of SAV1 and vice-versa. Binds to CSNK1D. Interacts with NCOA2; NCOA2 can interact with ESR1 AF-1 and AF-2 domains simultaneously and mediate their transcriptional synergy. Interacts with DDX5. Interacts with NCOA1; the interaction seems to require a self-association of N-terminal and C-terminal regions. Interacts with ZNF366, DDX17, NFKB1, RELA, SP1 and SP3. Interacts with NRIP1. Interacts with GPER1; the interaction occurs in an estrogen-dependent manner. Interacts with CLOCK and the interaction is stimulated by estrogen. Interacts with TRIP4 (ufmylated); estrogen dependent. Interacts with LMTK3; the interaction phosphorylates ESR1 (in vitro) and protects it against proteasomal degradation. Interacts with CCAR2 (via N-terminus) in a ligand-independent manner. Interacts with ZFHX3. Interacts with SFR1 in a ligand-dependent and -independent manner. Interacts with DCAF13, LATS1 and DCAF1; regulates ESR1 ubiquitination and ubiquitin-mediated proteasomal degradation. Interacts (via DNA-binding domain) with POU4F2 (C-terminus); this interaction increases the estrogen receptor ESR1 transcriptional activity in a DNA- and ligand 17-beta-estradiol-independent manner. Interacts with ESRRB isoform 1. Interacts with UBE3A and WBP2. Interacts with GTF2B. Interacts with RBM39. In the absence of hormonal ligand, interacts with TACC1. Interacts with BAG1; the interaction is promoted in the absence of estradiol (17-beta-estradiol/E2). Interacts with and ubiquitinated by STUB1; the interaction is promoted in the absence of estradiol (17-beta-estradiol/E2). Interacts with NEDD8. Ubiquitinated; regulated by LATS1 via DCAF1 it leads to ESR1 proteasomal degradation. Deubiquitinated by OTUB1. Ubiquitinated by STUB1/CHIP; in the CA1 hippocampal region following loss of endogenous circulating estradiol (17-beta-estradiol/E2). Ubiquitinated by UBR5, leading to its degradation: UBR5 specifically recognizes and binds ligand-bound ESR1 when it is not associated with coactivators (NCOAs). In presence of NCOAs, the UBR5-degron is not accessible, preventing its ubiquitination and degradation. In terms of processing, palmitoylated at Cys-45 by ZDHHC7 and ZDHHC21. Palmitoylation is required for plasma membrane targeting and for rapid intracellular signaling via ERK and AKT kinases and cAMP generation, but not for signaling mediated by the nuclear hormone receptor. Post-translationally, phosphorylated by cyclin A/CDK2 and CK1. Phosphorylation probably enhances transcriptional activity. Dephosphorylation by PPP5C inhibits its transactivation activity. Phosphorylated by LMTK3 (in vitro). Dimethylated by PRMT1. Demethylated by JMJD6.

The protein resides in the nucleus. It is found in the cytoplasm. Its subcellular location is the golgi apparatus. It localises to the cell membrane. Its function is as follows. Nuclear hormone receptor. The steroid hormones and their receptors are involved in the regulation of eukaryotic gene expression and affect cellular proliferation and differentiation in target tissues. Ligand-dependent nuclear transactivation involves either direct homodimer binding to a palindromic estrogen response element (ERE) sequence or association with other DNA-binding transcription factors, such as AP-1/c-Jun, c-Fos, ATF-2, Sp1 and Sp3, to mediate ERE-independent signaling. Ligand binding induces a conformational change allowing subsequent or combinatorial association with multiprotein coactivator complexes through LXXLL motifs of their respective components. Mutual transrepression occurs between the estrogen receptor (ER) and NF-kappa-B in a cell-type specific manner. Decreases NF-kappa-B DNA-binding activity and inhibits NF-kappa-B-mediated transcription from the IL6 promoter and displace RELA/p65 and associated coregulators from the promoter. Recruited to the NF-kappa-B response element of the CCL2 and IL8 promoters and can displace CREBBP. Present with NF-kappa-B components RELA/p65 and NFKB1/p50 on ERE sequences. Can also act synergistically with NF-kappa-B to activate transcription involving respective recruitment adjacent response elements; the function involves CREBBP. Can activate the transcriptional activity of TFF1. Also mediates membrane-initiated estrogen signaling involving various kinase cascades. Essential for MTA1-mediated transcriptional regulation of BRCA1 and BCAS3. Maintains neuronal survival in response to ischemic reperfusion injury when in the presence of circulating estradiol (17-beta-estradiol/E2). The sequence is that of Estrogen receptor (ESR1) from Macaca mulatta (Rhesus macaque).